A 146-amino-acid polypeptide reads, in one-letter code: Prolactin-inducible protein homolog (146 aa).

A signal peptide spans 1–28 (MHLLQLLFRASPATLLLVLCLQLGANKA). At Gln29 the chain carries Pyrrolidone carboxylic acid. 2 disulfide bridges follow: Cys65-Cys91 and Cys89-Cys123. N-linked (GlcNAc...) asparagine glycosylation is present at Asn105.

The protein belongs to the PIP family. In terms of assembly, monomer. Interacts with AZGP1.

The protein localises to the secreted. The polypeptide is Prolactin-inducible protein homolog (PIP) (Pongo pygmaeus (Bornean orangutan)).